The primary structure comprises 156 residues: Transcription antitermination protein NusB (156 aa).

This sequence belongs to the NusB family.

In terms of biological role, involved in transcription antitermination. Required for transcription of ribosomal RNA (rRNA) genes. Binds specifically to the boxA antiterminator sequence of the ribosomal RNA (rrn) operons. This chain is Transcription antitermination protein NusB, found in Mycobacterium bovis (strain ATCC BAA-935 / AF2122/97).